The primary structure comprises 119 residues: MKLLSNISMSSSEIIDVLCENLNDGIWALRVLYAEGAMNKEKLWDYINQYHKDYQIENEKDYEGKKILPSRYALDIMTARLEGAGLISFKAIGRVRIYDVTDLGNVLIKELEKRVEKNN.

As to quaternary structure, homodimer. Binds to TubZ filaments via the C-terminus of TubZ. DNA is not required for binding to TubZ.

Functionally, a DNA-binding protein that is part of the type III plasmid partition system used to ensure correct segregation of the pBc10987 plasmid. Binds TubZ filaments but does not influence the GTPase activity of TubZ with or without DNA. Cooperatively binds to multiple regions in tubC (centromere-like site) upstream of its own gene with consensus sequence N(T/A)ATTNC(C/G)GNAAT(A/T)N; probably forms an extended DNA-protein filament. Binds sites in its own promoter region and presumably represses its expression; its effect on RNA expression has not been shown. Does not specifically bind to the putative origin of replication on pBc10987. The chain is DNA-binding protein TubR from Bacillus cereus (strain ATCC 10987 / NRS 248).